The primary structure comprises 311 residues: Ribosomal RNA large subunit methyltransferase F (311 aa).

Belongs to the methyltransferase superfamily. METTL16/RlmF family.

Its subcellular location is the cytoplasm. The catalysed reaction is adenosine(1618) in 23S rRNA + S-adenosyl-L-methionine = N(6)-methyladenosine(1618) in 23S rRNA + S-adenosyl-L-homocysteine + H(+). Its function is as follows. Specifically methylates the adenine in position 1618 of 23S rRNA. In Pectobacterium atrosepticum (strain SCRI 1043 / ATCC BAA-672) (Erwinia carotovora subsp. atroseptica), this protein is Ribosomal RNA large subunit methyltransferase F.